Consider the following 449-residue polypeptide: MSPESKKLFNIIILGVAFMFMFTAFQTCGNVAQTVIRSLNSTDFHGSGYTSMAIIYGVFSASNLITPPVVAIVGPQLSMFASGLFYSMYIAVFNQPFPWSFYTASVFIGIAAAVLWTAQGNCLTINSDEHTIGRNSGIFWALLQSSLFFGNLYVYFAWQGKTQISESDRRTVFIALTVISLVGTVLFFLIRKPDSENVLGEDESSDDQDMEVNESAQNNLTKAVDAFKKSFKLCVTKEMLLLSITTAYTGLELTFFSGVYGTCIGAINKFGAEEKSLIGLSGIFIGIGEILGGSLFGLLSKNNRFGRNPVVLLGILVHFIAFYLIFLNMPGDAPIAPVKGTDSSAYIKSSKEVAILCSFLLGLGDSCFNTQLLSILGFLYSEDSAPAFAIFKFVQSICAAVAFFYSNYLLLHWQLLVMVIFGFFGTLSFFTVEWEAAAFVARGSDYRSI.

Residues 8–28 (LFNIIILGVAFMFMFTAFQTC) traverse the membrane as a helical segment. Asn-40 carries an N-linked (GlcNAc...) asparagine glycan. Transmembrane regions (helical) follow at residues 53–73 (AIIYGVFSASNLITPPVVAIV), 74–94 (GPQLSMFASGLFYSMYIAVFN), 96–116 (PFPWSFYTASVFIGIAAAVLW), 138–158 (IFWALLQSSLFFGNLYVYFAW), and 170–190 (RTVFIALTVISLVGTVLFFLI). Residue Ser-204 is modified to Phosphoserine. 6 helical membrane-spanning segments follow: residues 239–259 (MLLLSITTAYTGLELTFFSGV), 277–297 (LIGLSGIFIGIGEILGGSLFG), 309–329 (PVVLLGILVHFIAFYLIFLNM), 359–379 (FLLGLGDSCFNTQLLSILGFL), 385–405 (APAFAIFKFVQSICAAVAFFY), and 410–430 (LLHWQLLVMVIFGFFGTLSFF).

Belongs to the unc-93 family.

The protein localises to the membrane. This Pongo abelii (Sumatran orangutan) protein is UNC93-like protein MFSD11 (MFSD11).